The following is a 415-amino-acid chain: Amylovoran biosynthesis protein AmsJ (415 aa).

It belongs to the polysaccharide pyruvyl transferase family.

Its pathway is glycan metabolism; exopolysaccharide biosynthesis. Involved in the biosynthesis of amylovoran which functions as a virulence factor. The protein is Amylovoran biosynthesis protein AmsJ (amsJ) of Erwinia amylovora (Fire blight bacteria).